The primary structure comprises 285 residues: MGALLWSLLLLLQEAKGFSGDDEDPEEVIGVLQESINLSLEIPSNEEIKHIDWLFQNNIAIVKPGKKGQPAVIMAVDPRYRGRVSISESSYSLHISNLTWEDSGLYNAQVNLKTSESHITKSYHLRVYRRLSKPHITVNSNISEEGVCNISLTCSIERAGMDVTYIWLSSQDSTNTSHEGSVLSTSWRPGDKAPSYTCRVSNPVSNISSRRISVGSFCADPGYPEKPSMLCLLVKSLFLLLLLAILTVGLCLFRAQKSYETPRVRKLKRNRIKLRKKGKSGPTPV.

The N-terminal stretch at 1-17 (MGALLWSLLLLLQEAKG) is a signal peptide. Residues 18–232 (FSGDDEDPEE…YPEKPSMLCL (215 aa)) lie on the Extracellular side of the membrane. Residues 25–126 (PEEVIGVLQE…SHITKSYHLR (102 aa)) form the Ig-like V-type domain. 6 N-linked (GlcNAc...) asparagine glycosylation sites follow: Asn-37, Asn-97, Asn-141, Asn-149, Asn-175, and Asn-206. The Ig-like C2-type domain maps to 134-213 (PHITVNSNIS…VSNISSRRIS (80 aa)). A disulfide bond links Cys-154 and Cys-198. Residues 233–253 (LVKSLFLLLLLAILTVGLCLF) traverse the membrane as a helical segment. The Cytoplasmic segment spans residues 254 to 285 (RAQKSYETPRVRKLKRNRIKLRKKGKSGPTPV).

The protein localises to the membrane. In terms of biological role, may play a role in the immune response. The chain is SLAM family member 9 (Slamf9) from Mus musculus (Mouse).